A 447-amino-acid polypeptide reads, in one-letter code: Glutamate--tRNA ligase 2 (447 aa).

Positions 8 to 18 match the 'HIGH' region motif; it reads PSPTGYLHVGN. Positions 239–243 match the 'KMSKS' region motif; it reads KLSKR. Residue Lys-242 coordinates ATP.

Belongs to the class-I aminoacyl-tRNA synthetase family. Glutamate--tRNA ligase type 1 subfamily. As to quaternary structure, monomer.

The protein localises to the cytoplasm. It carries out the reaction tRNA(Glu) + L-glutamate + ATP = L-glutamyl-tRNA(Glu) + AMP + diphosphate. Functionally, catalyzes the attachment of glutamate to tRNA(Glu) in a two-step reaction: glutamate is first activated by ATP to form Glu-AMP and then transferred to the acceptor end of tRNA(Glu). This Granulibacter bethesdensis (strain ATCC BAA-1260 / CGDNIH1) protein is Glutamate--tRNA ligase 2.